The following is a 125-amino-acid chain: Large ribosomal subunit protein bL12 (125 aa).

It belongs to the bacterial ribosomal protein bL12 family. Homodimer. Part of the ribosomal stalk of the 50S ribosomal subunit. Forms a multimeric L10(L12)X complex, where L10 forms an elongated spine to which 2 to 4 L12 dimers bind in a sequential fashion. Binds GTP-bound translation factors.

Its function is as follows. Forms part of the ribosomal stalk which helps the ribosome interact with GTP-bound translation factors. Is thus essential for accurate translation. In Thermoanaerobacter pseudethanolicus (strain ATCC 33223 / 39E) (Clostridium thermohydrosulfuricum), this protein is Large ribosomal subunit protein bL12.